The chain runs to 203 residues: Small ribosomal subunit protein uS5 (203 aa).

In terms of domain architecture, S5 DRBM spans 49–112 (FEERVVKIKR…KNANNNLIKV (64 aa)).

It belongs to the universal ribosomal protein uS5 family. As to quaternary structure, part of the 30S ribosomal subunit. Contacts proteins S4 and S8.

Its function is as follows. With S4 and S12 plays an important role in translational accuracy. Functionally, located at the back of the 30S subunit body where it stabilizes the conformation of the head with respect to the body. This chain is Small ribosomal subunit protein uS5, found in Ureaplasma parvum serovar 3 (strain ATCC 700970).